The primary structure comprises 532 residues: 2-isopropylmalate synthase (532 aa).

The 263-residue stretch at 5–267 (VIIFDTTLRD…HTNINHQEIY (263 aa)) folds into the Pyruvate carboxyltransferase domain. Residues Asp-14, His-202, His-204, and Asn-238 each contribute to the Mn(2+) site. The interval 392–532 (HLDYFSVQSG…SKQQNSQETV (141 aa)) is regulatory domain. The tract at residues 513–532 (QQHNNQQQNDSKQQNSQETV) is disordered.

Belongs to the alpha-IPM synthase/homocitrate synthase family. LeuA type 1 subfamily. Homodimer. Mn(2+) is required as a cofactor.

The protein resides in the cytoplasm. It carries out the reaction 3-methyl-2-oxobutanoate + acetyl-CoA + H2O = (2S)-2-isopropylmalate + CoA + H(+). It functions in the pathway amino-acid biosynthesis; L-leucine biosynthesis; L-leucine from 3-methyl-2-oxobutanoate: step 1/4. Its function is as follows. Catalyzes the condensation of the acetyl group of acetyl-CoA with 3-methyl-2-oxobutanoate (2-ketoisovalerate) to form 3-carboxy-3-hydroxy-4-methylpentanoate (2-isopropylmalate). The sequence is that of 2-isopropylmalate synthase from Pectobacterium atrosepticum (strain SCRI 1043 / ATCC BAA-672) (Erwinia carotovora subsp. atroseptica).